Here is an 87-residue protein sequence, read N- to C-terminus: UPF0367 protein Syncc9902_0316 (87 aa).

It belongs to the UPF0367 family.

This is UPF0367 protein Syncc9902_0316 from Synechococcus sp. (strain CC9902).